The following is a 376-amino-acid chain: Queuine tRNA-ribosyltransferase (376 aa).

Asp-93 (proton acceptor) is an active-site residue. Substrate is bound by residues 93-97 (DSGGF), Asp-147, Gln-190, and Gly-217. The interval 248-254 (GVGKPDD) is RNA binding. Asp-267 acts as the Nucleophile in catalysis. Zn(2+) contacts are provided by Cys-305, Cys-307, Cys-310, and His-336.

Belongs to the queuine tRNA-ribosyltransferase family. In terms of assembly, homodimer. Within each dimer, one monomer is responsible for RNA recognition and catalysis, while the other monomer binds to the replacement base PreQ1. Zn(2+) is required as a cofactor.

It carries out the reaction 7-aminomethyl-7-carbaguanine + guanosine(34) in tRNA = 7-aminomethyl-7-carbaguanosine(34) in tRNA + guanine. It functions in the pathway tRNA modification; tRNA-queuosine biosynthesis. Functionally, catalyzes the base-exchange of a guanine (G) residue with the queuine precursor 7-aminomethyl-7-deazaguanine (PreQ1) at position 34 (anticodon wobble position) in tRNAs with GU(N) anticodons (tRNA-Asp, -Asn, -His and -Tyr). Catalysis occurs through a double-displacement mechanism. The nucleophile active site attacks the C1' of nucleotide 34 to detach the guanine base from the RNA, forming a covalent enzyme-RNA intermediate. The proton acceptor active site deprotonates the incoming PreQ1, allowing a nucleophilic attack on the C1' of the ribose to form the product. After dissociation, two additional enzymatic reactions on the tRNA convert PreQ1 to queuine (Q), resulting in the hypermodified nucleoside queuosine (7-(((4,5-cis-dihydroxy-2-cyclopenten-1-yl)amino)methyl)-7-deazaguanosine). In Ruegeria sp. (strain TM1040) (Silicibacter sp.), this protein is Queuine tRNA-ribosyltransferase.